Reading from the N-terminus, the 472-residue chain is 3-isopropylmalate dehydratase large subunit (472 aa).

Cys-347, Cys-407, and Cys-410 together coordinate [4Fe-4S] cluster.

The protein belongs to the aconitase/IPM isomerase family. LeuC type 1 subfamily. Heterodimer of LeuC and LeuD. It depends on [4Fe-4S] cluster as a cofactor.

The catalysed reaction is (2R,3S)-3-isopropylmalate = (2S)-2-isopropylmalate. It functions in the pathway amino-acid biosynthesis; L-leucine biosynthesis; L-leucine from 3-methyl-2-oxobutanoate: step 2/4. In terms of biological role, catalyzes the isomerization between 2-isopropylmalate and 3-isopropylmalate, via the formation of 2-isopropylmaleate. The chain is 3-isopropylmalate dehydratase large subunit from Bacillus licheniformis (strain ATCC 14580 / DSM 13 / JCM 2505 / CCUG 7422 / NBRC 12200 / NCIMB 9375 / NCTC 10341 / NRRL NRS-1264 / Gibson 46).